A 183-amino-acid chain; its full sequence is Ribonuclease H (183 aa).

The region spanning 2–151 (SQARFIAFSD…VDQLAQAAAR (150 aa)) is the RNase H type-1 domain. Mg(2+)-binding residues include Asp-11, Glu-57, Asp-79, and Asp-143.

The protein belongs to the RNase H family. In terms of assembly, monomer. The cofactor is Mg(2+).

The protein localises to the cytoplasm. The enzyme catalyses Endonucleolytic cleavage to 5'-phosphomonoester.. Functionally, endonuclease that specifically degrades the RNA of RNA-DNA hybrids. The polypeptide is Ribonuclease H (Anaeromyxobacter dehalogenans (strain 2CP-C)).